The chain runs to 590 residues: (-)-alpha-terpineol synthase (590 aa).

Residues D339, D343, D483, T487, and E491 each contribute to the Mg(2+) site. The DDXXD motif motif lies at 339–343 (DDVYD).

The protein belongs to the terpene synthase family. It depends on Mg(2+) as a cofactor.

It catalyses the reaction (2E)-geranyl diphosphate + H2O = (S)-alpha-terpineol + diphosphate. It participates in secondary metabolite biosynthesis; terpenoid biosynthesis. Mediates the conversion of geranyl diphosphate into alpha-terpineol, a monoterpenol. Monoterpenols contribute to the final grape and wine aroma and flavor. Also forms some 1,8-cineole and traces of other monoterpenoids. This Vitis vinifera (Grape) protein is (-)-alpha-terpineol synthase.